A 304-amino-acid polypeptide reads, in one-letter code: Acetylglutamate kinase (304 aa).

Substrate contacts are provided by residues 77–78, R99, and N193; that span reads GG.

The protein belongs to the acetylglutamate kinase family. ArgB subfamily.

It localises to the cytoplasm. The catalysed reaction is N-acetyl-L-glutamate + ATP = N-acetyl-L-glutamyl 5-phosphate + ADP. Its pathway is amino-acid biosynthesis; L-arginine biosynthesis; N(2)-acetyl-L-ornithine from L-glutamate: step 2/4. Catalyzes the ATP-dependent phosphorylation of N-acetyl-L-glutamate. The chain is Acetylglutamate kinase from Chlorobium limicola (strain DSM 245 / NBRC 103803 / 6330).